Consider the following 528-residue polypeptide: Butyrophilin subfamily 2 member A2 (528 aa).

The signal sequence occupies residues 1–29 (MESAAALHFSRPASLLLLLLLSLCALVSA). Over 30 to 249 (QVTVVGPTDP…SFMPSVSPCA (220 aa)) the chain is Extracellular. Residues 31–142 (VTVVGPTDPI…SYDEAILHLI (112 aa)) enclose the Ig-like V-type domain. Asn-47, Asn-115, and Asn-121 each carry an N-linked (GlcNAc...) asparagine glycan. An intrachain disulfide couples Cys-52 to Cys-126. Residues 150 to 232 (PLIEMRGHED…NNTLLSQKKE (83 aa)) enclose the Ig-like C2-type domain. The chain crosses the membrane as a helical span at residues 250-270 (VALPIVVVILMILFAVCMYWI). Residues 270–320 (INKLQKEKKILSGEKEFERETREIAVKELEKERVQKEEELQVKEKLQEELR) adopt a coiled-coil conformation. The Cytoplasmic segment spans residues 271–528 (NKLQKEKKIL…LHRVGTHQSL (258 aa)). The 197-residue stretch at 311–507 (VKEKLQEELR…IFICPALTGA (197 aa)) folds into the B30.2/SPRY domain.

This sequence belongs to the immunoglobulin superfamily. BTN/MOG family. Post-translationally, N-glycosylated.

The protein localises to the membrane. Inhibits the proliferation of CD4 and CD8 T-cells activated by anti-CD3 antibodies, T-cell metabolism and IL2 and IFNG secretion. This Pongo abelii (Sumatran orangutan) protein is Butyrophilin subfamily 2 member A2 (BTN2A2).